The following is a 164-amino-acid chain: UPF0114 protein YqhA (164 aa).

The next 3 helical transmembrane spans lie at 15-35, 53-73, and 136-156; these read LLAPVYFGLSLALIALALKFF, LILVLLSLVDMTLVGGLLVMV, and LMWYVIIHLTFVLSAFVMGYL.

It belongs to the UPF0114 family.

Its subcellular location is the cell membrane. The sequence is that of UPF0114 protein YqhA from Salmonella agona (strain SL483).